The sequence spans 55 residues: SICSEPKKVGRCKGYFPRFYFDSETGKCTPFIYGGCGGNGNNFETLHQCRAICRA.

The 51-residue stretch at 3-53 (CSEPKKVGRCKGYFPRFYFDSETGKCTPFIYGGCGGNGNNFETLHQCRAIC) folds into the BPTI/Kunitz inhibitor domain. 3 disulfide bridges follow: C3–C53, C12–C36, and C28–C49.

It is found in the secreted. The protein localises to the nematocyst. Functionally, active against serine, cysteine, and aspartic proteases. Can bind vertebrate trypsin and chymotrypsin. In Stichodactyla helianthus (Sun anemone), this protein is PI-stichotoxin-She2a.